A 365-amino-acid polypeptide reads, in one-letter code: Quinolone epoxide rearrangement protein asqO (365 aa).

The protein belongs to the quinolone epoxide rearrangement protein penF family.

It carries out the reaction (1'E,3'E)-5-(3,3-dimethyloxiran-2-yl)-3-methylhexa-1,3-dienyl-quinolinone B = aspoquinolone A. It catalyses the reaction (1'E,3'E)-5-(3,3-dimethyloxiran-2-yl)-3-methylhexa-1,3-dienyl-quinolinone B = aspoquinolone B. It functions in the pathway secondary metabolite biosynthesis. The protein operates within alkaloid biosynthesis. It participates in mycotoxin biosynthesis. Quinolone epoxide rearrangement protein; part of the gene cluster that mediates the biosynthesis of the aspoquinolone mycotoxins. Within the pathway, asqO catalyzes an enzymatic 3-exo-tet cyclization to yield the cyclopropyl-THF ring system in aspoquinolone. The first step of the pathway is catalyzed by the nonribosomal peptide synthetase asqK that condenses anthranilic acid and O-methyl-L-tyrosine to produce 4'-methoxycyclopeptin. 4'-methoxycyclopeptin is then converted to 4'-methoxydehydrocyclopeptin by the ketoglutarate-dependent dioxygenase asqJ. AsqJ also converts its first product 4'-methoxydehydrocyclopeptin to 4'-methoxycyclopenin. The following conversion of 4'-methoxycyclopenin into 4'-methoxyviridicatin is catalyzed by the cyclopenase asqI. 4'-methoxyviridicatin is the precursor of quinolone natural products, and is further converted to quinolinone B. The prenyltransferase asqH1 then catalyzes the canonical Friedel-Crafts alkylation of quinolinone B with dimethylallyl cation to yield dimethylallyl quinolone, which is subjected to FAD-dependent dehydrogenation by the FAD-linked oxidoreductase asqF to yield conjugated aryl diene. The delta(3') double bond then serves as the site of the second alkylation with DMAPP catalyzed by the prenyltransferase asqH2 to yield a carbenium ion intermediate, which can be attacked by H(2)O to yield a styrenyl quinolone containing a C3'-hydroxyprenyl chain. The FAD-dependent monooxygenase asqG performs epoxidation of the terminal C7'-C8' olefin. Finally, after dehydratation of the epoxide at C3 by asqC, the quinolone epoxide rearrangement protein asqO catalyzes an enzymatic 3-exo-tet cyclization to yield the cyclopropyl-THF ring system in aspoquinolone. In Emericella nidulans (strain FGSC A4 / ATCC 38163 / CBS 112.46 / NRRL 194 / M139) (Aspergillus nidulans), this protein is Quinolone epoxide rearrangement protein asqO.